We begin with the raw amino-acid sequence, 147 residues long: 3-dehydroquinate dehydratase (147 aa).

Residue Tyr26 is the Proton acceptor of the active site. Residues Asn77, His83, and Asp90 each contribute to the substrate site. His103 acts as the Proton donor in catalysis. Substrate contacts are provided by residues 104-105 and Arg114; that span reads LS.

The protein belongs to the type-II 3-dehydroquinase family. Homododecamer.

The catalysed reaction is 3-dehydroquinate = 3-dehydroshikimate + H2O. It functions in the pathway metabolic intermediate biosynthesis; chorismate biosynthesis; chorismate from D-erythrose 4-phosphate and phosphoenolpyruvate: step 3/7. Its function is as follows. Catalyzes a trans-dehydration via an enolate intermediate. The polypeptide is 3-dehydroquinate dehydratase (Proteus mirabilis (strain HI4320)).